Consider the following 768-residue polypeptide: ATP-dependent RNA helicase DBP4 (768 aa).

A Q motif motif is present at residues 41-69 (VFFKDLPISNSTLKGLNDSAFLKLTDIQR). The Helicase ATP-binding domain maps to 72–246 (IPMSLKGYDI…RLSLTDYKTI (175 aa)). ATP is bound at residue 85-92 (AKTGSGKT). The short motif at 194–197 (DEAD) is the DEAD box element. Residues 280 to 439 (KLDMLYSFIK…SIKPQLQSLL (160 aa)) enclose the Helicase C-terminal domain. Disordered stretches follow at residues 581–612 (EEELPQLSLPSSRRAQKRALSKKASLSTKGNA) and 653–754 (KDVM…EPQT). Over residues 653-666 (KDVMNEVDVEDKQV) the composition is skewed to basic and acidic residues. Residues 667 to 678 (AKQKKQEKKRKR) show a composition bias toward basic residues. The segment covering 711–721 (DMQDPDSDDEE) has biased composition (acidic residues).

It belongs to the DEAD box helicase family. DDX10/DBP4 subfamily. Interacts with the U3 and U14 snoRNAs. Associates with pre-ribosomal complexes.

The protein localises to the nucleus. It is found in the nucleolus. It catalyses the reaction ATP + H2O = ADP + phosphate + H(+). ATP-dependent RNA helicase required for ribosome biogenesis. Involved in the release of U14 snoRNA in pre-ribosomal complexes. Required for pre-rRNA cleavage at site A2. The sequence is that of ATP-dependent RNA helicase DBP4 (DBP4) from Vanderwaltozyma polyspora (strain ATCC 22028 / DSM 70294 / BCRC 21397 / CBS 2163 / NBRC 10782 / NRRL Y-8283 / UCD 57-17) (Kluyveromyces polysporus).